A 955-amino-acid polypeptide reads, in one-letter code: UvrABC system protein A (955 aa).

Position 35-42 (35-42 (GLSGSGKS)) interacts with ATP. ABC transporter domains are found at residues 322–601 (WGST…EESI) and 621–951 (GHDN…RYLK). 654–661 (GVSGSGKS) serves as a coordination point for ATP. The C4-type zinc-finger motif lies at 754-780 (CEACQGDGLIKIEMHFLPDVYVKCDIC).

It belongs to the ABC transporter superfamily. UvrA family. In terms of assembly, forms a heterotetramer with UvrB during the search for lesions.

It localises to the cytoplasm. In terms of biological role, the UvrABC repair system catalyzes the recognition and processing of DNA lesions. UvrA is an ATPase and a DNA-binding protein. A damage recognition complex composed of 2 UvrA and 2 UvrB subunits scans DNA for abnormalities. When the presence of a lesion has been verified by UvrB, the UvrA molecules dissociate. This chain is UvrABC system protein A, found in Rickettsia felis (strain ATCC VR-1525 / URRWXCal2) (Rickettsia azadi).